The sequence spans 581 residues: NADP-dependent malic enzyme 1 (581 aa).

The Proton donor role is filled by Y129. Residue R182 coordinates NADP(+). K200 functions as the Proton acceptor in the catalytic mechanism. E272, D273, and D296 together coordinate a divalent metal cation. Residues D296, 325-341 (LFLG…ELIA), and N437 each bind NADP(+).

It belongs to the malic enzymes family. In terms of assembly, homohexamers and homooctamers. The cofactor is Mg(2+). Requires Mn(2+) as cofactor. Specifically expressed in roots (only in steles of secondary roots).

The protein resides in the cytoplasm. The catalysed reaction is (S)-malate + NADP(+) = pyruvate + CO2 + NADPH. It carries out the reaction oxaloacetate + H(+) = pyruvate + CO2. The chain is NADP-dependent malic enzyme 1 (NADP-ME1) from Arabidopsis thaliana (Mouse-ear cress).